An 815-amino-acid chain; its full sequence is Probable inorganic carbon transporter subunit DabA (815 aa).

4 residues coordinate Zn(2+): C334, D336, H507, and C522.

It belongs to the inorganic carbon transporter (TC 9.A.2) DabA family. As to quaternary structure, forms a complex with DabB. It depends on Zn(2+) as a cofactor.

The protein resides in the cell inner membrane. In terms of biological role, part of an energy-coupled inorganic carbon pump. This Ectopseudomonas mendocina (strain ymp) (Pseudomonas mendocina) protein is Probable inorganic carbon transporter subunit DabA.